Consider the following 178-residue polypeptide: MEFKSILLDEKAIKRTLTRIAHEIIEKNKGVEDIVLLGIQRRGVPIARRIAALIEQFEDVKVEVGSVDITLYRDDLTEVAEQPLLNEKSLDIDVKNKKIILVDDVLFTGRTARAAMEAVIKHGRPDNIQLAVLVDRGHRELPIRADYVGKNVPTSKKELVSVMVSEIDSEDAVKIFEK.

The short motif at 99–111 (IILVDDVLFTGRT) is the PRPP-binding element.

It belongs to the purine/pyrimidine phosphoribosyltransferase family. PyrR subfamily. Homodimer and homohexamer; in equilibrium.

It carries out the reaction UMP + diphosphate = 5-phospho-alpha-D-ribose 1-diphosphate + uracil. Regulates transcriptional attenuation of the pyrimidine nucleotide (pyr) operon by binding in a uridine-dependent manner to specific sites on pyr mRNA. This disrupts an antiterminator hairpin in the RNA and favors formation of a downstream transcription terminator, leading to a reduced expression of downstream genes. In terms of biological role, also displays a weak uracil phosphoribosyltransferase activity which is not physiologically significant. The polypeptide is Bifunctional protein PyrR (Clostridium novyi (strain NT)).